A 70-amino-acid polypeptide reads, in one-letter code: Turripeptide Gsg9.2 (70 aa).

Residues 1-20 (MKVYCLLLVLLVGLVSQAHG) form the signal peptide. The Kazal-like domain maps to 21 to 70 (QLDKKCQMVCTMDYRPVCGSDGRTYPNKCTLTSTACMSQRSITVFHDGEC). Cystine bridges form between Cys-26/Cys-56, Cys-30/Cys-49, and Cys-38/Cys-70.

It belongs to the conopeptide P-like superfamily. Expressed by the venom duct.

It is found in the secreted. Functionally, acts as a neurotoxin by inhibiting an ion channel. May also act as a serine protease inhibitor, since it possess the kazal serine protease inhibitor signature. This chain is Turripeptide Gsg9.2, found in Gemmula sogodensis (Gem-turris).